Here is a 317-residue protein sequence, read N- to C-terminus: tRNA pseudouridine synthase B (317 aa).

The Nucleophile role is filled by aspartate 47.

Belongs to the pseudouridine synthase TruB family. Type 1 subfamily.

It catalyses the reaction uridine(55) in tRNA = pseudouridine(55) in tRNA. In terms of biological role, responsible for synthesis of pseudouridine from uracil-55 in the psi GC loop of transfer RNAs. This chain is tRNA pseudouridine synthase B, found in Shewanella sp. (strain MR-7).